Here is a 405-residue protein sequence, read N- to C-terminus: Type II secretion system protein F (405 aa).

At M1 to N169 the chain is on the cytoplasmic side. Positions 98, 151, and 155 each coordinate Ca(2+). The helical transmembrane segment at A170–G190 threads the bilayer. At Y191–G218 the chain is on the periplasmic side. A helical transmembrane segment spans residues L219–L239. Residues D240–A370 are Cytoplasmic-facing. The chain crosses the membrane as a helical span at residues L371–I391. Over S392 to G405 the chain is Periplasmic.

It belongs to the GSP F family. As to quaternary structure, type II secretion system is composed of four main components: the outer membrane complex, the inner membrane complex, the cytoplasmic secretion ATPase and the periplasm-spanning pseudopilus. Homodimer. Interacts with XpsE and XpsL components.

The protein resides in the cell inner membrane. Its function is as follows. Component of the type II secretion system inner membrane complex required for the energy-dependent secretion of extracellular factors such as proteases and toxins from the periplasm. The chain is Type II secretion system protein F (xpsF) from Xanthomonas campestris pv. campestris (strain ATCC 33913 / DSM 3586 / NCPPB 528 / LMG 568 / P 25).